Consider the following 77-residue polypeptide: U8-lycotoxin-Ls1m (77 aa).

The N-terminal stretch at M1–A20 is a signal peptide. Positions Q21–K26 are excised as a propeptide.

Belongs to the neurotoxin 19 (CSTX) family. 08 (U8-Lctx) subfamily. Contains 4 disulfide bonds. As to expression, expressed by the venom gland.

It localises to the secreted. The polypeptide is U8-lycotoxin-Ls1m (Lycosa singoriensis (Wolf spider)).